The following is a 49-amino-acid chain: Metallothionein (49 aa).

The segment at 1–16 is beta; it reads SCAGSCKCKNCRCRSC. Cys-2, Cys-6, Cys-8, Cys-11, Cys-13, Cys-16, Cys-20, Cys-21, Cys-23, Cys-24, Cys-28, Cys-31, Cys-35, Cys-37, Cys-45, Cys-47, and Cys-48 together coordinate a divalent metal cation. Positions 17 to 49 are alpha; that stretch reads RKSCCSCCPAGCNNCAKGCVCKEPASSKCSCCH.

Belongs to the metallothionein superfamily. Type 1 family.

Metallothioneins have a high content of cysteine residues that bind various heavy metals. This is Metallothionein from Phasianus colchicus colchicus (Black-necked pheasant).